A 960-amino-acid polypeptide reads, in one-letter code: UPF0182 protein DSY1630 (960 aa).

The next 7 membrane-spanning stretches (helical) occupy residues 7-27, 50-70, 105-125, 169-189, 212-232, 256-276, and 285-305; these read IMLVLLGIGLILFIALSGLFE, IIQIINGTILFTFIAGTLFSI, TLWLIIISVLISFGVSFVTGF, FGPLFFLTFFTIVFYSFAGVI, LALLITVLFLFKGFGCYFDTF, ALKALLVLCALGVIGGGLAFF, and LPILAIFISIPLLSGLGPMVL. 2 disordered regions span residues 866–899 and 924–960; these read SALAVSPMSAELKPEETEETTEETEEPVDPQEDT and TGDSVDVEGGKKADEDAHDVQTDPEGSVSSEQSKTNP. The span at 881-897 shows a compositional bias: acidic residues; it reads ETEETTEETEEPVDPQE. A compositionally biased stretch (basic and acidic residues) spans 931 to 944; it reads EGGKKADEDAHDVQ. Positions 950 to 960 are enriched in polar residues; that stretch reads SVSSEQSKTNP.

This sequence belongs to the UPF0182 family.

It localises to the cell membrane. In Desulfitobacterium hafniense (strain Y51), this protein is UPF0182 protein DSY1630.